The chain runs to 308 residues: Ornithine carbamoyltransferase (308 aa).

Carbamoyl phosphate-binding positions include 56–59 (STRT), Q83, R107, and 134–137 (HPCQ). L-ornithine-binding positions include N165, D225, and 229-230 (SM). Carbamoyl phosphate-binding positions include 266–267 (CL) and R294.

The protein belongs to the aspartate/ornithine carbamoyltransferase superfamily. OTCase family.

It is found in the cytoplasm. The catalysed reaction is carbamoyl phosphate + L-ornithine = L-citrulline + phosphate + H(+). It participates in amino-acid biosynthesis; L-arginine biosynthesis; L-arginine from L-ornithine and carbamoyl phosphate: step 1/3. Functionally, reversibly catalyzes the transfer of the carbamoyl group from carbamoyl phosphate (CP) to the N(epsilon) atom of ornithine (ORN) to produce L-citrulline. This Cereibacter sphaeroides (strain ATCC 17029 / ATH 2.4.9) (Rhodobacter sphaeroides) protein is Ornithine carbamoyltransferase.